The chain runs to 140 residues: Large ribosomal subunit protein uL14 (140 aa).

Position 17 is a phosphoserine (Ser17). Position 38 is a phosphotyrosine (Tyr38).

This sequence belongs to the universal ribosomal protein uL14 family. As to quaternary structure, component of the large ribosomal subunit.

The protein localises to the cytoplasm. Its function is as follows. Component of the large ribosomal subunit. The ribosome is a large ribonucleoprotein complex responsible for the synthesis of proteins in the cell. The chain is Large ribosomal subunit protein uL14 (RPL23) from Canis lupus familiaris (Dog).